The chain runs to 121 residues: Histone H2B, sperm (121 aa).

Positions Met1–Lys30 are disordered. At Pro2 the chain carries N,N-dimethylproline. A glycan (O-linked (GlcNAc) serine) is linked at Ser108. A Glycyl lysine isopeptide (Lys-Gly) (interchain with G-Cter in ubiquitin) cross-link involves residue Lys116.

It belongs to the histone H2B family. As to quaternary structure, the nucleosome is a histone octamer containing two molecules each of H2A, H2B, H3 and H4 assembled in one H3-H4 heterotetramer and two H2A-H2B heterodimers. The octamer wraps approximately 147 bp of DNA. Post-translationally, monoubiquitination of Lys-116 gives a specific tag for epigenetic transcriptional activation and is also prerequisite for histone H3 'Lys-4' and 'Lys-79' methylation. In terms of processing, glcNAcylation at Ser-108 promotes monoubiquitination of Lys-116. It fluctuates in response to extracellular glucose, and associates with transcribed genes.

Its subcellular location is the nucleus. The protein resides in the chromosome. Core component of nucleosome. Nucleosomes wrap and compact DNA into chromatin, limiting DNA accessibility to the cellular machineries which require DNA as a template. Histones thereby play a central role in transcription regulation, DNA repair, DNA replication and chromosomal stability. DNA accessibility is regulated via a complex set of post-translational modifications of histones, also called histone code, and nucleosome remodeling. This chain is Histone H2B, sperm, found in Marthasterias glacialis (Spiny starfish).